A 110-amino-acid chain; its full sequence is MEAKATAKYIRISPQKARLVVDLIRGKKVDDAREILNYSRKRSGQIVGKVLKSAFANAVQNPNIDEKILFVKEIFVDQGPSMKRWRARAQGRAASIKKRMSHITVILDEK.

This sequence belongs to the universal ribosomal protein uL22 family. In terms of assembly, part of the 50S ribosomal subunit.

This protein binds specifically to 23S rRNA; its binding is stimulated by other ribosomal proteins, e.g. L4, L17, and L20. It is important during the early stages of 50S assembly. It makes multiple contacts with different domains of the 23S rRNA in the assembled 50S subunit and ribosome. In terms of biological role, the globular domain of the protein is located near the polypeptide exit tunnel on the outside of the subunit, while an extended beta-hairpin is found that lines the wall of the exit tunnel in the center of the 70S ribosome. This Syntrophus aciditrophicus (strain SB) protein is Large ribosomal subunit protein uL22.